The chain runs to 81 residues: Defensin-like protein 313 (81 aa).

A signal peptide spans 1-32; it reads MESKRSSSSPLLILITTIMIIFIISGPKSVDA. Cystine bridges form between Cys-34-Cys-63, Cys-45-Cys-74, and Cys-49-Cys-76.

It belongs to the DEFL family.

It is found in the secreted. The chain is Defensin-like protein 313 from Arabidopsis thaliana (Mouse-ear cress).